Reading from the N-terminus, the 333-residue chain is MQQIIYIANAESENIEVWILYNNGDMKLIQTVQTDGQVQPISIIKNTKLLYAGIRPKNRVITYQIDKNGLLKKKKESIVPGTPNYISFDSSEKFLFCSSYHADCISVSPLDKNGIPKDPIQIIHNIEGCHAAKFNSKYNVLFITSLKNDCIYLYYLTHFGILKSTEQKLVFSQKNSGPRHVIFHPNQNFSYTVNELNGSVDVWKISKENKVLEVKNIQNIKLLNDLISKKYWSSDIHLTSCGNFLYVSDRYLNSISLFHVNKNDNTIIFFKQYLTEEQPRAFCIDRNNNYLIVIGQKSNKLSVYKICQKTGELKKINQYQTGNGPLWITSFLI.

This sequence belongs to the cycloisomerase 2 family.

It catalyses the reaction 6-phospho-D-glucono-1,5-lactone + H2O = 6-phospho-D-gluconate + H(+). The protein operates within carbohydrate degradation; pentose phosphate pathway; D-ribulose 5-phosphate from D-glucose 6-phosphate (oxidative stage): step 2/3. Functionally, catalyzes the hydrolysis of 6-phosphogluconolactone to 6-phosphogluconate. This Buchnera aphidicola subsp. Schizaphis graminum (strain Sg) protein is 6-phosphogluconolactonase.